The following is a 319-amino-acid chain: Lipoyl synthase (319 aa).

Residues 1–32 form a disordered region; that stretch reads MVVLVDTVSSTPVRPRHPEKAARPDSLSPKKP. Basic and acidic residues predominate over residues 16–32; sequence RHPEKAARPDSLSPKKP. Residues C61, C66, C72, C87, C91, C94, and S300 each contribute to the [4Fe-4S] cluster site. One can recognise a Radical SAM core domain in the interval 73–289; sequence WDKKHATFMI…GKTAYAKGFL (217 aa).

This sequence belongs to the radical SAM superfamily. Lipoyl synthase family. Requires [4Fe-4S] cluster as cofactor.

It is found in the cytoplasm. The catalysed reaction is [[Fe-S] cluster scaffold protein carrying a second [4Fe-4S](2+) cluster] + N(6)-octanoyl-L-lysyl-[protein] + 2 oxidized [2Fe-2S]-[ferredoxin] + 2 S-adenosyl-L-methionine + 4 H(+) = [[Fe-S] cluster scaffold protein] + N(6)-[(R)-dihydrolipoyl]-L-lysyl-[protein] + 4 Fe(3+) + 2 hydrogen sulfide + 2 5'-deoxyadenosine + 2 L-methionine + 2 reduced [2Fe-2S]-[ferredoxin]. Its pathway is protein modification; protein lipoylation via endogenous pathway; protein N(6)-(lipoyl)lysine from octanoyl-[acyl-carrier-protein]: step 2/2. Functionally, catalyzes the radical-mediated insertion of two sulfur atoms into the C-6 and C-8 positions of the octanoyl moiety bound to the lipoyl domains of lipoate-dependent enzymes, thereby converting the octanoylated domains into lipoylated derivatives. In Rhodopseudomonas palustris (strain BisB5), this protein is Lipoyl synthase.